A 433-amino-acid polypeptide reads, in one-letter code: Pyroglutamylated RF-amide peptide receptor (433 aa).

Topologically, residues 1–46 are extracellular; that stretch reads MQALNITAEQFSRLLSAHNLTREQFIHRYGLRPLVYTPELPARAKV. 2 N-linked (GlcNAc...) asparagine glycosylation sites follow: N5 and N19. The chain crosses the membrane as a helical span at residues 47–67; the sequence is AFALAGALIFALALFGNSLVI. The Cytoplasmic portion of the chain corresponds to 68–81; the sequence is YVVTRSKAMRTVTN. Residues 82-102 form a helical membrane-spanning segment; the sequence is IFICSLALSDLLIAFFCIPVT. Over 103–120 the chain is Extracellular; the sequence is MLQNISDKWLGGAFICKM. A helical transmembrane segment spans residues 121–141; it reads VPFVQSTAVVTEILTMTCIAV. The Cytoplasmic portion of the chain corresponds to 142-162; the sequence is ERHQGLVHPFKMKWQYTTRRA. A helical transmembrane segment spans residues 163–183; the sequence is FTILGVVWLAAIIVGSPMWHV. Residues 184 to 212 are Extracellular-facing; that stretch reads QRLEIKYDFLYEKEHICCLEEWASPVHQR. The helical transmembrane segment at 213 to 233 threads the bilayer; the sequence is IYSTFILVILFLLPLVVMLVL. Residues 234-271 lie on the Cytoplasmic side of the membrane; it reads YSKIGYELWIKKRVGDSSALQTIHGKEMSKIARKKKRA. Residues 272–292 traverse the membrane as a helical segment; the sequence is VIMMVTVVALFAACWAPFHVV. At 293–313 the chain is on the extracellular side; that stretch reads HMMVEYSNFEKEYDDVTIKMV. The helical transmembrane segment at 314–334 threads the bilayer; the sequence is FAVAQTIGFFNSICNPFVYAF. Residues 335–433 are Cytoplasmic-facing; sequence MNENFKKNFL…NSTFGSGHEL (99 aa). The interval 356-389 is disordered; it reads SSPARKPGNSGISMMQKRAKLSRPQRPVEETKGD.

The protein belongs to the G-protein coupled receptor 1 family. As to expression, highly expressed in the adrenal gland and at moderate levels in the eye and testis. Expressed widely in the brain with high levels in the hypothalamus and moderate levels in the amygdala, basal forebrain, cortex, medulla oblongata, midbrain and thalamus.

The protein resides in the cell membrane. Receptor for the orexigenic neuropeptide QRFP. The activity of this receptor is mediated by G proteins that modulate adenylate cyclase activity and intracellular calcium levels. In Rattus norvegicus (Rat), this protein is Pyroglutamylated RF-amide peptide receptor (Qrfpr).